The following is a 390-amino-acid chain: Queuine tRNA-ribosyltransferase (390 aa).

Residue Asp92 is the Proton acceptor of the active site. Residues 92 to 96, Asp146, Gln195, and Gly222 contribute to the substrate site; that span reads DSGGF. The segment at 253-259 is RNA binding; the sequence is GVGTPED. Asp272 functions as the Nucleophile in the catalytic mechanism. An RNA binding; important for wobble base 34 recognition region spans residues 277-281; the sequence is TRNAR. Residues Cys310, Cys312, Cys315, and His354 each contribute to the Zn(2+) site.

Belongs to the queuine tRNA-ribosyltransferase family. As to quaternary structure, homodimer. Within each dimer, one monomer is responsible for RNA recognition and catalysis, while the other monomer binds to the replacement base PreQ1. It depends on Zn(2+) as a cofactor.

The catalysed reaction is 7-aminomethyl-7-carbaguanine + guanosine(34) in tRNA = 7-aminomethyl-7-carbaguanosine(34) in tRNA + guanine. The protein operates within tRNA modification; tRNA-queuosine biosynthesis. Its function is as follows. Catalyzes the base-exchange of a guanine (G) residue with the queuine precursor 7-aminomethyl-7-deazaguanine (PreQ1) at position 34 (anticodon wobble position) in tRNAs with GU(N) anticodons (tRNA-Asp, -Asn, -His and -Tyr). Catalysis occurs through a double-displacement mechanism. The nucleophile active site attacks the C1' of nucleotide 34 to detach the guanine base from the RNA, forming a covalent enzyme-RNA intermediate. The proton acceptor active site deprotonates the incoming PreQ1, allowing a nucleophilic attack on the C1' of the ribose to form the product. After dissociation, two additional enzymatic reactions on the tRNA convert PreQ1 to queuine (Q), resulting in the hypermodified nucleoside queuosine (7-(((4,5-cis-dihydroxy-2-cyclopenten-1-yl)amino)methyl)-7-deazaguanosine). The protein is Queuine tRNA-ribosyltransferase of Delftia acidovorans (strain DSM 14801 / SPH-1).